We begin with the raw amino-acid sequence, 744 residues long: Cell division cycle protein 27 homolog B (744 aa).

One copy of the TPR 1 repeat lies at Ala101–Leu134. A compositionally biased stretch (polar residues) spans Asn180–Arg199. Disordered stretches follow at residues Asn180–Ser218 and Glu359–Glu390. Residues Glu363 to Arg374 show a composition bias toward basic and acidic residues. Over residues Pro375–Asn387 the composition is skewed to polar residues. TPR repeat units follow at residues Gly450–Cys483, Pro518–Phe551, Tyr553–His585, Asn587–Ser619, Val621–Asn653, Leu655–Glu687, and Ser688–Ala721.

Belongs to the APC3/CDC27 family. The APC/C is composed of at least 10 subunits. Can homodimerize. Interacts with APC2, APC10, FZR2 and FZR3. Interacts with PANS1. Interacts with SAMBA. As to expression, specifically expressed in dividing and elongating cells.

The protein localises to the nucleus. Its pathway is protein modification; protein ubiquitination. Its function is as follows. Component of the anaphase promoting complex/cyclosome (APC/C), a cell cycle-regulated E3 ubiquitin-protein ligase complex that controls progression through mitosis and the G1 phase of the cell cycle. The APC/C complex controls several key steps in the cell cycle by mediating ubiquitination and subsequent degradation of target proteins such as cyclins. The APC/C complex is required for the female gametophyte development and is involved in several aspect of development by controlling cell division and cell elongation. Involved in the control of endoreduplication. Functionally redundant with CDC27A in the control of gametophyte development. The sequence is that of Cell division cycle protein 27 homolog B (CDC27B) from Arabidopsis thaliana (Mouse-ear cress).